Consider the following 199-residue polypeptide: Peptidyl-tRNA hydrolase (199 aa).

Residue tyrosine 15 coordinates tRNA. Residue histidine 20 is the Proton acceptor of the active site. Residues tyrosine 66, asparagine 68, and asparagine 114 each coordinate tRNA.

This sequence belongs to the PTH family. In terms of assembly, monomer.

It localises to the cytoplasm. It carries out the reaction an N-acyl-L-alpha-aminoacyl-tRNA + H2O = an N-acyl-L-amino acid + a tRNA + H(+). Hydrolyzes ribosome-free peptidyl-tRNAs (with 1 or more amino acids incorporated), which drop off the ribosome during protein synthesis, or as a result of ribosome stalling. Its function is as follows. Catalyzes the release of premature peptidyl moieties from peptidyl-tRNA molecules trapped in stalled 50S ribosomal subunits, and thus maintains levels of free tRNAs and 50S ribosomes. This is Peptidyl-tRNA hydrolase from Burkholderia cenocepacia (strain HI2424).